Here is a 169-residue protein sequence, read N- to C-terminus: Neurotensin/neuromedin N (169 aa).

The signal sequence occupies residues 1-22; the sequence is MIGMNLQLVCLTLLAFSSWSLC.

Belongs to the neurotensin family. As to quaternary structure, interacts with NTSR1. Interacts with SORT1. Interacts with SORL1. Post-translationally, neurotensin is cleaved and degraded by Angiotensin-converting enzyme (ACE) and neprilysin (MME).

It is found in the secreted. The protein localises to the cytoplasmic vesicle. It localises to the secretory vesicle. Its function is as follows. Neurotensin may play an endocrine or paracrine role in the regulation of fat metabolism. It causes contraction of smooth muscle. The chain is Neurotensin/neuromedin N (Nts) from Rattus norvegicus (Rat).